The chain runs to 567 residues: Proline--tRNA ligase (567 aa).

It belongs to the class-II aminoacyl-tRNA synthetase family. ProS type 1 subfamily. In terms of assembly, homodimer.

It is found in the cytoplasm. It carries out the reaction tRNA(Pro) + L-proline + ATP = L-prolyl-tRNA(Pro) + AMP + diphosphate. In terms of biological role, catalyzes the attachment of proline to tRNA(Pro) in a two-step reaction: proline is first activated by ATP to form Pro-AMP and then transferred to the acceptor end of tRNA(Pro). As ProRS can inadvertently accommodate and process non-cognate amino acids such as alanine and cysteine, to avoid such errors it has two additional distinct editing activities against alanine. One activity is designated as 'pretransfer' editing and involves the tRNA(Pro)-independent hydrolysis of activated Ala-AMP. The other activity is designated 'posttransfer' editing and involves deacylation of mischarged Ala-tRNA(Pro). The misacylated Cys-tRNA(Pro) is not edited by ProRS. This is Proline--tRNA ligase from Staphylococcus aureus (strain Mu3 / ATCC 700698).